The sequence spans 491 residues: Mitochondrial MYO2 receptor-related protein 1 (491 aa).

A Phosphothreonine modification is found at T12. A phosphoserine mark is found at S16 and S37. Residues N295–E384 adopt a coiled-coil conformation. Residues N300–T439 are interaction with MYO2. The interval K419 to K491 is disordered. Residues S461–G472 show a composition bias toward polar residues.

Interacts with MYO2 and PCL7. Post-translationally, phosphorylated by the cyclin-CDK PCL7-PHO85.

The protein localises to the bud tip. Its subcellular location is the bud neck. It localises to the mitochondrion outer membrane. Its function is as follows. Involved in the guiding of mitochondrial tubules to the bud tip during cell division. The polypeptide is Mitochondrial MYO2 receptor-related protein 1 (MMR1) (Saccharomyces cerevisiae (strain ATCC 204508 / S288c) (Baker's yeast)).